The sequence spans 405 residues: Formate-dependent phosphoribosylglycinamide formyltransferase (405 aa).

Residues 22 to 23 (EL) and Glu82 each bind N(1)-(5-phospho-beta-D-ribosyl)glycinamide. Residues Arg115, Lys162, 167–172 (SSGKGQ), 202–205 (EGFI), and Glu210 each bind ATP. Positions 120-320 (RLAAETLGLP…EFELHARAIL (201 aa)) constitute an ATP-grasp domain. The Mg(2+) site is built by Glu279 and Glu291. N(1)-(5-phospho-beta-D-ribosyl)glycinamide contacts are provided by residues Asp298, Lys367, and 374–375 (RR).

Belongs to the PurK/PurT family. Homodimer.

The enzyme catalyses N(1)-(5-phospho-beta-D-ribosyl)glycinamide + formate + ATP = N(2)-formyl-N(1)-(5-phospho-beta-D-ribosyl)glycinamide + ADP + phosphate + H(+). Its pathway is purine metabolism; IMP biosynthesis via de novo pathway; N(2)-formyl-N(1)-(5-phospho-D-ribosyl)glycinamide from N(1)-(5-phospho-D-ribosyl)glycinamide (formate route): step 1/1. In terms of biological role, involved in the de novo purine biosynthesis. Catalyzes the transfer of formate to 5-phospho-ribosyl-glycinamide (GAR), producing 5-phospho-ribosyl-N-formylglycinamide (FGAR). Formate is provided by PurU via hydrolysis of 10-formyl-tetrahydrofolate. In Leptothrix cholodnii (strain ATCC 51168 / LMG 8142 / SP-6) (Leptothrix discophora (strain SP-6)), this protein is Formate-dependent phosphoribosylglycinamide formyltransferase.